Here is a 282-residue protein sequence, read N- to C-terminus: Pantothenate synthetase (282 aa).

30–37 serves as a coordination point for ATP; the sequence is MGYLHEGH. H37 acts as the Proton donor in catalysis. (R)-pantoate is bound at residue Q61. Q61 is a binding site for beta-alanine. 147–150 lines the ATP pocket; sequence GEKD. Q153 is a (R)-pantoate binding site. Residues I176 and 184–187 each bind ATP; that span reads KSSR.

It belongs to the pantothenate synthetase family. In terms of assembly, homodimer.

It is found in the cytoplasm. It carries out the reaction (R)-pantoate + beta-alanine + ATP = (R)-pantothenate + AMP + diphosphate + H(+). The protein operates within cofactor biosynthesis; (R)-pantothenate biosynthesis; (R)-pantothenate from (R)-pantoate and beta-alanine: step 1/1. Catalyzes the condensation of pantoate with beta-alanine in an ATP-dependent reaction via a pantoyl-adenylate intermediate. This Enterococcus faecalis (strain ATCC 700802 / V583) protein is Pantothenate synthetase.